We begin with the raw amino-acid sequence, 437 residues long: O-methyltransferase elcB (437 aa).

D269 is an S-adenosyl-L-methionine binding site. H319 functions as the Proton acceptor in the catalytic mechanism.

The protein belongs to the class I-like SAM-binding methyltransferase superfamily. Cation-independent O-methyltransferase family. COMT subfamily.

It participates in secondary metabolite biosynthesis. O-methyltransferase; part of the gene cluster that mediates the biosynthesis of elsinochrome C, a perelyenequinone phytotoxin structurally similar to cercosporin. The first step of elsinochrome C biosynthesis is performed by the polyketide synthase elcA which catalyzes the formation of nor-toralactone. The starter unit acyltransferase (SAT) domain of elcA initiates polyketide extension by the selective utilization of acetyl-CoA, which is elongated to the heptaketide in the beta-ketoacyl synthase (KS) domain by successive condensations with six malonyl units introduced by the malonyl acyltransferase (MAT) domain. The product template (PT) domain catalyzes C4-C9 and C2-C11 aldol cyclizations and dehydrations to a trihydroxynaphthalene, which is thought to be delivered to the thioesterase (TE) domain for product release. The bifunctional enzyme elcB then methylates nor-toralactone to toralactone before conducting an unusual oxidative aromatic ring opening. The next step in perylenequinone biosynthesis is an O-methylation at the nascent OH-6 of the elcB product performed by the O-methyltransferase elcD. The oxidative coupling of the two monomeric naphthol units in perylenequinone biosynthesis is catalyzed by the FAD-dependent monooxygenase elcE and the multicopper oxidase elcG. ElcG might catalyze the first intermolecular coupling in a regio- and stereo-selective manner via a phenol radical coupling mechanism and the elcE could forge the second C-C bond intramolecularly via a hydride transfer mechanism. The fasciclin domain-containing protein elcF might also play a role duting this step. The last piece of the puzzle in the biosynthesis of elsinochrome C is the additional annulation by enolate coupling to afford the dihydrobenzo(ghi)perylenequinone system, catalyzed by the FAD-dependent monooxygenase elcH. In Phaeosphaeria nodorum (strain SN15 / ATCC MYA-4574 / FGSC 10173) (Glume blotch fungus), this protein is O-methyltransferase elcB.